Reading from the N-terminus, the 210-residue chain is Urease accessory protein UreE (210 aa).

The interval 136–210 is disordered; it reads PEGGAYAEPS…HGHSHAHDHK (75 aa). Composition is skewed to basic and acidic residues over residues 145–169 and 178–196; these read SHAH…TSHD and HDHD…EHCG. A compositionally biased stretch (basic residues) spans 197 to 210; sequence HDHHHGHSHAHDHK.

This sequence belongs to the UreE family.

The protein localises to the cytoplasm. Its function is as follows. Involved in urease metallocenter assembly. Binds nickel. Probably functions as a nickel donor during metallocenter assembly. This chain is Urease accessory protein UreE, found in Bradyrhizobium sp. (strain ORS 278).